The following is a 444-amino-acid chain: MPFIVNTDAERAEMLREIGVENFEALIADIPEEIRLKKALDLFPAMGEPEVKSLLEKMASGNAATCDHVSFLGAGAYDHFIPSAVKTIASRSEFYTAYTPYQAEVSQGTLQAIYEYQSVMCRLYGMDVANASMYDGASALAEAALIALNVTGRNGIVVAGKLHPYTSQVLETYLEAAGDRSIVQNGLENGIGSVEALEALVSSETAAVIVQQPNFYGCLEEVEAIGEIARKNGALFIVSADPVSLGVLEAPGNYGADIAVGEGQSVGNAQSFGGPYLGILTVKQAHVRKIPGRLVGMTKDKDGNDGFILTLQTREQHIRREKATSNICSNQALCALQSVVHLSLLGKEGIRDVANRSMQKAHYLADRIAELPGYSMKFSAPFFREFVVETPVPSATIIEKMLEKKVFAGVDLSAWGEDGLLVAVTEKRTKEELDSFVSELAALG.

The protein belongs to the GcvP family. N-terminal subunit subfamily. In terms of assembly, the glycine cleavage system is composed of four proteins: P, T, L and H. In this organism, the P 'protein' is a heterodimer of two subunits.

It carries out the reaction N(6)-[(R)-lipoyl]-L-lysyl-[glycine-cleavage complex H protein] + glycine + H(+) = N(6)-[(R)-S(8)-aminomethyldihydrolipoyl]-L-lysyl-[glycine-cleavage complex H protein] + CO2. In terms of biological role, the glycine cleavage system catalyzes the degradation of glycine. The P protein binds the alpha-amino group of glycine through its pyridoxal phosphate cofactor; CO(2) is released and the remaining methylamine moiety is then transferred to the lipoamide cofactor of the H protein. The protein is Probable glycine dehydrogenase (decarboxylating) subunit 1 of Chlorobaculum tepidum (strain ATCC 49652 / DSM 12025 / NBRC 103806 / TLS) (Chlorobium tepidum).